A 1533-amino-acid chain; its full sequence is DNA topoisomerase 2-alpha (1533 aa).

Residue methionine 1 is modified to N-acetylmethionine. A disordered region spans residues 1-22 (MEVSPLQPVNENMQVNKTKKNE). Serine 4 carries the post-translational modification Phosphoserine. Polar residues predominate over residues 7–16 (QPVNENMQVN). A Glycyl lysine isopeptide (Lys-Gly) (interchain with G-Cter in SUMO2) cross-link involves residue lysine 17. ATP-binding positions include asparagine 91, asparagine 120, and 148–150 (SSN). Residues lysine 156 and lysine 157 each participate in a glycyl lysine isopeptide (Lys-Gly) (interchain with G-Cter in SUMO2) cross-link. 161 to 168 (GRNGYGAK) serves as a coordination point for ATP. Lysine 261 is covalently cross-linked (Glycyl lysine isopeptide (Lys-Gly) (interchain with G-Cter in SUMO2)). Threonine 282 is modified (phosphothreonine). The interval 342 to 344 (KKK) is interaction with DNA. A Glycyl lysine isopeptide (Lys-Gly) (interchain with G-Cter in SUMO2) cross-link involves residue lysine 352. 376–378 (QTK) is an ATP binding site. Glycyl lysine isopeptide (Lys-Gly) (interchain with G-Cter in SUMO2) cross-links involve residues lysine 386, lysine 397, lysine 416, lysine 418, lysine 425, and lysine 440. One can recognise a Toprim domain in the interval 455 to 572 (CTLILTEGDS…SLLRHRFLEE (118 aa)). Residue glutamate 461 participates in Mg(2+) binding. Residues lysine 466, lysine 480, and lysine 529 each participate in a glycyl lysine isopeptide (Lys-Gly) (interchain with G-Cter in SUMO2) cross-link. The Mg(2+) site is built by aspartate 541 and aspartate 543. Residues lysine 584, lysine 599, lysine 614, lysine 622, lysine 625, lysine 632, lysine 639, lysine 655, lysine 662, and lysine 676 each participate in a glycyl lysine isopeptide (Lys-Gly) (interchain with G-Cter in SUMO2) cross-link. Residues 715 to 1171 (IPSMVDGLKP…SPSDLWKEDL (457 aa)) enclose the Topo IIA-type catalytic domain. Residue tyrosine 805 is the O-(5'-phospho-DNA)-tyrosine intermediate of the active site. Residues 990-999 (KLQTSLTCNS) form an interaction with DNA region. Residue lysine 1075 forms a Glycyl lysine isopeptide (Lys-Gly) (interchain with G-Cter in SUMO2) linkage. Disordered stretches follow at residues 1090 to 1121 (WKEA…VADS) and 1183 to 1215 (AKEK…PSPC). A compositionally biased stretch (acidic residues) spans 1099–1108 (DEEENEESDN). Residue serine 1106 is modified to Phosphoserine; by CK1. Glycyl lysine isopeptide (Lys-Gly) (interchain with G-Cter in SUMO2) cross-links involve residues lysine 1114, lysine 1196, and lysine 1204. A Phosphothreonine modification is found at threonine 1205. The residue at position 1213 (serine 1213) is a Phosphoserine. A Glycyl lysine isopeptide (Lys-Gly) (interchain with G-Cter in SUMO2) cross-link involves residue lysine 1228. A disordered region spans residues 1231–1533 (AEKKIKKKIK…LEESDEDDLF (303 aa)). A Glycyl lysine isopeptide (Lys-Gly) (interchain with G-Cter in SUMO1); alternate cross-link involves residue lysine 1240. Residue lysine 1240 forms a Glycyl lysine isopeptide (Lys-Gly) (interchain with G-Cter in SUMO2); alternate linkage. A Phosphothreonine modification is found at threonine 1244. Serine 1247 bears the Phosphoserine mark. The span at 1256 to 1272 (EGLKQRLEKKQKREPGT) shows a compositional bias: basic and acidic residues. Glycyl lysine isopeptide (Lys-Gly) (interchain with G-Cter in SUMO2) cross-links involve residues lysine 1259, lysine 1276, lysine 1283, and lysine 1286. A phosphoserine mark is found at serine 1295, serine 1297, serine 1299, and serine 1302. The residue at position 1327 (threonine 1327) is a Phosphothreonine. A phosphoserine mark is found at serine 1332 and serine 1337. Position 1343 is a phosphothreonine (threonine 1343). A phosphoserine mark is found at serine 1351 and serine 1354. Residues 1360–1371 (TSPKHTNKEPKP) are compositionally biased toward basic and acidic residues. Glycyl lysine isopeptide (Lys-Gly) (interchain with G-Cter in SUMO2) cross-links involve residues lysine 1363, lysine 1367, and lysine 1373. A phosphoserine mark is found at serine 1374 and serine 1377. Lysine 1387 is covalently cross-linked (Glycyl lysine isopeptide (Lys-Gly) (interchain with G-Cter in SUMO2)). Phosphoserine occurs at positions 1393 and 1395. A compositionally biased stretch (low complexity) spans 1409-1433 (KPVSKKNVTVKKTAAKSQSSTSTTG). Lysine 1424 is covalently cross-linked (Glycyl lysine isopeptide (Lys-Gly) (interchain with G-Cter in SUMO2); alternate). The residue at position 1424 (lysine 1424) is an N6-acetyllysine; alternate. An interaction with PLSCR1 region spans residues 1435-1441 (KKRAAPK). Residues 1443-1455 (AKKDPDLDSDVSK) show a composition bias toward basic and acidic residues. Lysine 1444 participates in a covalent cross-link: Glycyl lysine isopeptide (Lys-Gly) (interchain with G-Cter in SUMO2); alternate. Lysine 1444 carries the N6-acetyllysine; alternate modification. Position 1451 is a phosphoserine (serine 1451). Residues lysine 1456 and lysine 1461 each participate in a glycyl lysine isopeptide (Lys-Gly) (interchain with G-Cter in SUMO2) cross-link. A Phosphoserine modification is found at serine 1471. A Phosphothreonine modification is found at threonine 1472. Phosphoserine occurs at positions 1473, 1476, and 1478. Glycyl lysine isopeptide (Lys-Gly) (interchain with G-Cter in SUMO2) cross-links involve residues lysine 1486 and lysine 1494. Residues 1493-1504 (PKGESDDFHLDL) show a composition bias toward basic and acidic residues. Serine 1497 and serine 1527 each carry phosphoserine.

It belongs to the type II topoisomerase family. In terms of assembly, homodimer. Interacts with COPS5. Interacts with RECQL5; this stimulates DNA decatenation. Interacts with SETMAR; stimulates the topoisomerase activity. Interacts with DHX9; this interaction occurs in a E2 enzyme UBE2I- and RNA-dependent manner, negatively regulates DHX9-mediated double-stranded DNA and RNA duplex helicase activity and stimulates TOP2A-mediated supercoiled DNA relaxation activity. Interacts with HNRNPU (via C-terminus); this interaction protects the topoisomerase TOP2A from degradation and positively regulates the relaxation of supercoiled DNA in a RNA-dependent manner. Interacts with MCM3AP. Interacts with ERCC6. Interacts with PLSCR1. Interacts with GCNA; this interaction allows the resolution of topoisomerase II (TOP2A) DNA-protein cross-links. Interacts with POL1RA/RPA1 (via dock II) and UBTF in the context of Pol I complex; may assist Pol I transcription initiation by releasing supercoils occurring during DNA unwinding. Interacts with TPRN; TPRN interacts with a number of DNA damage response proteins, is recruited to sites of DNA damage and may play a role in DNA damage repair. Mg(2+) is required as a cofactor. Requires Mn(2+) as cofactor. Ca(2+) serves as cofactor. Phosphorylation has no effect on catalytic activity. However, phosphorylation at Ser-1106 by CSNK1D/CK1 promotes DNA cleavable complex formation.

Its subcellular location is the cytoplasm. The protein resides in the nucleus. It is found in the nucleoplasm. The protein localises to the nucleolus. The enzyme catalyses ATP-dependent breakage, passage and rejoining of double-stranded DNA.. Its function is as follows. Key decatenating enzyme that alters DNA topology by binding to two double-stranded DNA molecules, generating a double-stranded break in one of the strands, passing the intact strand through the broken strand, and religating the broken strand. May play a role in regulating the period length of BMAL1 transcriptional oscillation. The chain is DNA topoisomerase 2-alpha (TOP2A) from Sus scrofa (Pig).